Reading from the N-terminus, the 92-residue chain is Small ribosomal subunit protein uS19c (92 aa).

It belongs to the universal ribosomal protein uS19 family.

It localises to the plastid. The protein resides in the chloroplast. In terms of biological role, protein S19 forms a complex with S13 that binds strongly to the 16S ribosomal RNA. This is Small ribosomal subunit protein uS19c from Panax ginseng (Korean ginseng).